The chain runs to 160 residues: SsrA-binding protein (160 aa).

The segment at 136 to 160 (KRHVEKERDANREVQRAMRSKGKDD) is disordered.

It belongs to the SmpB family.

It is found in the cytoplasm. Functionally, required for rescue of stalled ribosomes mediated by trans-translation. Binds to transfer-messenger RNA (tmRNA), required for stable association of tmRNA with ribosomes. tmRNA and SmpB together mimic tRNA shape, replacing the anticodon stem-loop with SmpB. tmRNA is encoded by the ssrA gene; the 2 termini fold to resemble tRNA(Ala) and it encodes a 'tag peptide', a short internal open reading frame. During trans-translation Ala-aminoacylated tmRNA acts like a tRNA, entering the A-site of stalled ribosomes, displacing the stalled mRNA. The ribosome then switches to translate the ORF on the tmRNA; the nascent peptide is terminated with the 'tag peptide' encoded by the tmRNA and targeted for degradation. The ribosome is freed to recommence translation, which seems to be the essential function of trans-translation. This chain is SsrA-binding protein, found in Ectopseudomonas mendocina (strain ymp) (Pseudomonas mendocina).